The sequence spans 98 residues: NADH-ubiquinone oxidoreductase chain 4L (98 aa).

3 helical membrane-spanning segments follow: residues P2–F22, S29–L49, and I61–V81.

Belongs to the complex I subunit 4L family. In terms of assembly, core subunit of respiratory chain NADH dehydrogenase (Complex I) which is composed of 45 different subunits.

It is found in the mitochondrion inner membrane. The catalysed reaction is a ubiquinone + NADH + 5 H(+)(in) = a ubiquinol + NAD(+) + 4 H(+)(out). In terms of biological role, core subunit of the mitochondrial membrane respiratory chain NADH dehydrogenase (Complex I) which catalyzes electron transfer from NADH through the respiratory chain, using ubiquinone as an electron acceptor. Part of the enzyme membrane arm which is embedded in the lipid bilayer and involved in proton translocation. This chain is NADH-ubiquinone oxidoreductase chain 4L (MT-ND4L), found in Eulemur coronatus (Crowned lemur).